Consider the following 414-residue polypeptide: Putative competence-damage inducible protein (414 aa).

It belongs to the CinA family.

This Listeria monocytogenes serotype 4a (strain HCC23) protein is Putative competence-damage inducible protein.